The chain runs to 579 residues: Multidrug resistance-like ATP-binding protein MdlA (579 aa).

The region spanning tyrosine 18 to arginine 303 is the ABC transmembrane type-1 domain. Transmembrane regions (helical) follow at residues isoleucine 20–glycine 40, lysine 53–leucine 73, glycine 134–threonine 154, glutamine 155–isoleucine 175, isoleucine 247–isoleucine 267, and isoleucine 281–isoleucine 301. An ABC transporter domain is found at valine 338–leucine 572. Glycine 370–serine 377 contributes to the ATP binding site.

This sequence belongs to the ABC transporter superfamily. Drug exporter-2 (TC 3.A.1.117) family.

It localises to the cell membrane. The enzyme catalyses ATP + H2O + xenobioticSide 1 = ADP + phosphate + xenobioticSide 2.. This is Multidrug resistance-like ATP-binding protein MdlA (mdlA) from Buchnera aphidicola subsp. Baizongia pistaciae (strain Bp).